Here is a 723-residue protein sequence, read N- to C-terminus: Lim and transglutaminase domain protein ltd-1 (723 aa).

Positions 5 to 72 (QHCNRCGKQV…SNHVPIAGPH (68 aa)) constitute an LIM zinc-binding domain.

Belongs to the transglutaminase-like superfamily. As to expression, expressed in the Y and U rectal epithelial cells, in marginal cells of the terminal bulb and isthmus of the pharynx (at protein level).

It localises to the cytoplasm. Its subcellular location is the cytoskeleton. In terms of biological role, cytoskeleton-associated protein. May play a role in hypodermal cell development. The protein is Lim and transglutaminase domain protein ltd-1 of Caenorhabditis elegans.